The chain runs to 140 residues: PDZ domain-containing protein 11 (140 aa).

A PDZ domain is found at 47–129; it reads IVTLKKPPGA…ISMRVRFFPY (83 aa).

As to quaternary structure, interacts with ATP2B1, ATP2B2, ATP2B3, ATP2B4 and ATP7A. Interacts with PLEKHA7 (via WW domains) at zonula adherens; this interaction is essential for the interaction between PLEKHA7 and the ADAM10-binding protein TSPAN33. Interacts with SLC5A6.

It localises to the cytoplasm. The protein localises to the cell junction. Its subcellular location is the adherens junction. The protein resides in the cell membrane. Functionally, mediates docking of ADAM10 to zonula adherens by interacting with PLEKHA7 which is required for PLEKHA7 to interact with the ADAM10-binding protein TSPAN33. The protein is PDZ domain-containing protein 11 (PDZD11) of Bos taurus (Bovine).